Consider the following 851-residue polypeptide: MDRSSASRPDLYLIADNDSVYEQDLLRNPGTIKPWLAYIEYKQQNGTLYEQAFVGRPLDALIISILNDFQVMERACKQLPRSYKLWKMYLEFRTKHLKNRNAIKYRAEFQKVNTLFERALILLNKMPRIWEMYLTFMLQQPLVTQTRRTFDRALRALPVTQHNRIWKLYKTFARSASGQTAVKIWARYMQIHPENAEEYINLLVEMGHYTDAIKRYMEILDNPRFQSREGKSNFQLWTEMVDLLVSKAKKIETGPQTGIDVDAILRSGIDRFADQRGKLWAGLATYWITKGNFEKARDVFEEGITTVMTVRDFTLIFDSYVEFEESIIGSLMEAAAVRADNGKADEEADFDLDLRMLRFEQLMDRRPFLVNDVLLRQNPNNVIEWEKRVALWGDNNVEIVNTYTAAIAAINPKKAVGKFSELWVNYAKFYERGGDLDTARIIFEKAVKVPFKSVNELAETWCEWAEMELRSENFDKAVEIMAKATQAPKKSTVDYFDETLSPQQRIHKSWKLWSFYVDLVESVSSIEETKKVYERIFELRIATPQTVVNYANLLEEHKYFEESFKVYERGLDLFTYPVAFELWNLYLTKAVDRKIGIERLRDLFEQALDGCPPKFARPLYLMYGNLEEERGLARHAMRIYERATRAVSDEDRFEMFEFYITKSASNFGLPSTRPIYERAIAALPDHEAKEMCLKFAEMERRLGEIDRARAIYGHASQFCDPRTNAPFWQKWEAFEVQHGNEDTFKEMLRIKRSVQAQYNTDVNFIASQAIARSQQRAPEGEEATAAAEREMDTETTDAMAALERQARAPIGFVAASTGPEGGNRAPPAGQGPVAAPANPDAIDLDDDMEAD.

HAT repeat units follow at residues 12–44, 63–95, 107–139, 141–175, 291–326, 398–432, 434–470, 487–519, 558–592, 595–629, 667–701, and 703–737; these read YLIADNDSVYEQDLLRNPGTIKPWLAYIEYKQQ, ISILNDFQVMERACKQLPRSYKLWKMYLEFRTK, AEFQKVNTLFERALILLNKMPRIWEMYLTFMLQ, PLVTQTRRTFDRALRALPVTQHNRIWKLYKTFARS, GNFEKARDVFEEGITTVMTVRDFTLIFDSYVEFEES, EIVNTYTAAIAAINPKKAVGKFSELWVNYAKFYER, GDLDTARIIFEKAVKVPFKSVNELAETWCEWAEMELR, APKKSTVDYFDETLSPQQRIHKSWKLWSFYVDL, KYFEESFKVYERGLDLFTYPVAFELWNLYLTKAVD, IGIERLRDLFEQALDGCPPKFARPLYLMYGNLEEE, FGLPSTRPIYERAIAALPDHEAKEMCLKFAEMERR, and GEIDRARAIYGHASQFCDPRTNAPFWQKWEAFEVQ. 2 disordered regions span residues 771–793 and 810–851; these read ARSQQRAPEGEEATAAAEREMDT and IGFV…MEAD. Positions 825–841 are enriched in low complexity; the sequence is APPAGQGPVAAPANPDA. Residues 842 to 851 are compositionally biased toward acidic residues; the sequence is IDLDDDMEAD.

The protein belongs to the crooked-neck family. Associated with the spliceosome.

Its subcellular location is the nucleus. In terms of biological role, involved in pre-mRNA splicing and cell cycle progression. The sequence is that of Pre-mRNA-splicing factor syf1 (syf1) from Emericella nidulans (strain FGSC A4 / ATCC 38163 / CBS 112.46 / NRRL 194 / M139) (Aspergillus nidulans).